The chain runs to 311 residues: Glycerol-3-phosphate dehydrogenase [NAD(P)+] (311 aa).

4 residues coordinate NADPH: W12, R31, R32, and K96. Residues K96, G124, and S126 each contribute to the sn-glycerol 3-phosphate site. A128 contacts NADPH. Sn-glycerol 3-phosphate contacts are provided by K178, D231, S241, R242, and N243. Catalysis depends on K178, which acts as the Proton acceptor. R242 serves as a coordination point for NADPH. Positions 266 and 268 each coordinate NADPH.

Belongs to the NAD-dependent glycerol-3-phosphate dehydrogenase family.

The protein localises to the cytoplasm. The enzyme catalyses sn-glycerol 3-phosphate + NAD(+) = dihydroxyacetone phosphate + NADH + H(+). It carries out the reaction sn-glycerol 3-phosphate + NADP(+) = dihydroxyacetone phosphate + NADPH + H(+). It functions in the pathway membrane lipid metabolism; glycerophospholipid metabolism. In terms of biological role, catalyzes the reduction of the glycolytic intermediate dihydroxyacetone phosphate (DHAP) to sn-glycerol 3-phosphate (G3P), the key precursor for phospholipid synthesis. This Helicobacter hepaticus (strain ATCC 51449 / 3B1) protein is Glycerol-3-phosphate dehydrogenase [NAD(P)+].